Reading from the N-terminus, the 151-residue chain is Deoxyuridine 5'-triphosphate nucleotidohydrolase (151 aa).

Residues 70–72 (RSG), N83, 87–89 (LID), and M97 each bind substrate.

The protein belongs to the dUTPase family. Mg(2+) is required as a cofactor.

It carries out the reaction dUTP + H2O = dUMP + diphosphate + H(+). It functions in the pathway pyrimidine metabolism; dUMP biosynthesis; dUMP from dCTP (dUTP route): step 2/2. In terms of biological role, this enzyme is involved in nucleotide metabolism: it produces dUMP, the immediate precursor of thymidine nucleotides and it decreases the intracellular concentration of dUTP so that uracil cannot be incorporated into DNA. This chain is Deoxyuridine 5'-triphosphate nucleotidohydrolase, found in Pseudomonas fluorescens (strain Pf0-1).